A 456-amino-acid polypeptide reads, in one-letter code: tRNA modification GTPase MnmE (456 aa).

The (6S)-5-formyl-5,6,7,8-tetrahydrofolate site is built by Arg-21, Glu-85, and Lys-124. The 160-residue stretch at 220 to 379 folds into the TrmE-type G domain; sequence QFRIVLYGEP…LLDAIKERTG (160 aa). Residue Asn-230 participates in K(+) binding. GTP is bound by residues 230-235, 249-255, and 274-277; these read NTGKSS, SEIPGTT, and DTAG. Ser-234 contacts Mg(2+). The K(+) site is built by Ser-249, Ile-251, and Thr-254. A Mg(2+)-binding site is contributed by Thr-255. Residue Lys-456 coordinates (6S)-5-formyl-5,6,7,8-tetrahydrofolate.

It belongs to the TRAFAC class TrmE-Era-EngA-EngB-Septin-like GTPase superfamily. TrmE GTPase family. As to quaternary structure, homodimer. Heterotetramer of two MnmE and two MnmG subunits. The cofactor is K(+).

It is found in the cytoplasm. In terms of biological role, exhibits a very high intrinsic GTPase hydrolysis rate. Involved in the addition of a carboxymethylaminomethyl (cmnm) group at the wobble position (U34) of certain tRNAs, forming tRNA-cmnm(5)s(2)U34. In Leptospira interrogans serogroup Icterohaemorrhagiae serovar copenhageni (strain Fiocruz L1-130), this protein is tRNA modification GTPase MnmE.